Here is a 230-residue protein sequence, read N- to C-terminus: MVPEYSRFYNILGYNFKDYTLLIRALTHRSKTKKNYERLEFLGDSVLSFVIAEVLYKQFIDLAEGKLSQLRSKLVKGATLAQLASSLKMDEYIILGASEQGGHKREKILEDVFEAVIGAIYLDSDFATVKKVILKWYQPIISSINLDTIKVKDSKSKLQEILLQNALSLPEYSIETIDGKDHEQQFTVVAVSKDLNLRVKAQGTSRKKAEQKTAEKMIEMLSQQGLHEKK.

In terms of domain architecture, RNase III spans 5-125 (YSRFYNILGY…VIGAIYLDSD (121 aa)). A Mg(2+)-binding site is contributed by Glu40. Residue Asp44 is part of the active site. The Mg(2+) site is built by Asp111 and Glu114. Residue Glu114 is part of the active site. Residues 153-223 (DSKSKLQEIL…AEKMIEMLSQ (71 aa)) form the DRBM domain.

The protein belongs to the ribonuclease III family. As to quaternary structure, homodimer. Requires Mg(2+) as cofactor.

The protein localises to the cytoplasm. The catalysed reaction is Endonucleolytic cleavage to 5'-phosphomonoester.. Functionally, digests double-stranded RNA. Involved in the processing of primary rRNA transcript to yield the immediate precursors to the large and small rRNAs (23S and 16S). Processes some mRNAs, and tRNAs when they are encoded in the rRNA operon. Processes pre-crRNA and tracrRNA of type II CRISPR loci if present in the organism. The protein is Ribonuclease 3 of Francisella tularensis subsp. tularensis (strain FSC 198).